The sequence spans 449 residues: Biotin carboxylase (449 aa).

Positions 1 to 445 (MLDKIVIANR…NIHYLEKKLG (445 aa)) constitute a Biotin carboxylation domain. Residues lysine 116, lysine 159, 165-166 (GG), 201-204 (EKYL), histidine 209, and histidine 236 each bind ATP. Residues 120–317 (IAAMKKAGVP…LIKEQLRIAA (198 aa)) form the ATP-grasp domain. Lysine 238 contacts hydrogencarbonate. Glutamate 276 and glutamate 288 together coordinate ATP. Glutamate 276, glutamate 288, and asparagine 290 together coordinate Mg(2+). Positions 276, 288, and 290 each coordinate Mn(2+). Hydrogencarbonate contacts are provided by arginine 292, valine 295, and arginine 338. Arginine 292 is a catalytic residue. Residue arginine 338 participates in biotin binding.

In terms of assembly, acetyl-CoA carboxylase is a heterohexamer of biotin carboxyl carrier protein, biotin carboxylase and the two subunits of carboxyl transferase in a 2:2 complex. Requires Mg(2+) as cofactor. It depends on Mn(2+) as a cofactor.

It catalyses the reaction N(6)-biotinyl-L-lysyl-[protein] + hydrogencarbonate + ATP = N(6)-carboxybiotinyl-L-lysyl-[protein] + ADP + phosphate + H(+). It participates in lipid metabolism; malonyl-CoA biosynthesis; malonyl-CoA from acetyl-CoA: step 1/1. This protein is a component of the acetyl coenzyme A carboxylase complex; first, biotin carboxylase catalyzes the carboxylation of the carrier protein and then the transcarboxylase transfers the carboxyl group to form malonyl-CoA. The chain is Biotin carboxylase (accC) from Escherichia coli (strain K12).